Reading from the N-terminus, the 120-residue chain is NAD(P)H-quinone oxidoreductase subunit 3, chloroplastic (120 aa).

3 helical membrane-spanning segments follow: residues 9–29 (IFWT…WISG), 64–84 (MFAL…PWAM), and 88–108 (VLGV…VVGL).

Belongs to the complex I subunit 3 family. In terms of assembly, NDH is composed of at least 16 different subunits, 5 of which are encoded in the nucleus.

The protein resides in the plastid. It localises to the chloroplast thylakoid membrane. It carries out the reaction a plastoquinone + NADH + (n+1) H(+)(in) = a plastoquinol + NAD(+) + n H(+)(out). The catalysed reaction is a plastoquinone + NADPH + (n+1) H(+)(in) = a plastoquinol + NADP(+) + n H(+)(out). Functionally, NDH shuttles electrons from NAD(P)H:plastoquinone, via FMN and iron-sulfur (Fe-S) centers, to quinones in the photosynthetic chain and possibly in a chloroplast respiratory chain. The immediate electron acceptor for the enzyme in this species is believed to be plastoquinone. Couples the redox reaction to proton translocation, and thus conserves the redox energy in a proton gradient. This chain is NAD(P)H-quinone oxidoreductase subunit 3, chloroplastic, found in Agrostis stolonifera (Creeping bentgrass).